Here is a 277-residue protein sequence, read N- to C-terminus: MALKKFNPTTPSRRQMTMPTFEEVTTNAPEKSLLVSLKKTGGRNAQGKITVRHHGGGAKRKYRIIDFKRNKDGIPAKVATVEYDPNRSAYIALVVYADGEKRYILAPVGLKVGDTVVSGPEADIKPGNALQLKHMPVGTFVHNIELQAGKGGQMVRSAGTSAQLMAKEGNYATLRLPSGEMRYVRIECKATVGTVSNTTHEIVNIGKAGRKRHMGWRPTVRGSVMNPCDHPHGGGEGRSPIGRPSPVTPWGKPALGYKTRKNKKYSDRFIIKRRNAK.

The tract at residues 222–258 is disordered; sequence GSVMNPCDHPHGGGEGRSPIGRPSPVTPWGKPALGYK.

This sequence belongs to the universal ribosomal protein uL2 family. In terms of assembly, part of the 50S ribosomal subunit. Forms a bridge to the 30S subunit in the 70S ribosome.

One of the primary rRNA binding proteins. Required for association of the 30S and 50S subunits to form the 70S ribosome, for tRNA binding and peptide bond formation. It has been suggested to have peptidyltransferase activity; this is somewhat controversial. Makes several contacts with the 16S rRNA in the 70S ribosome. The chain is Large ribosomal subunit protein uL2 from Clostridium perfringens (strain 13 / Type A).